Here is a 327-residue protein sequence, read N- to C-terminus: Aspartate--ammonia ligase (327 aa).

This sequence belongs to the class-II aminoacyl-tRNA synthetase family. AsnA subfamily.

Its subcellular location is the cytoplasm. It catalyses the reaction L-aspartate + NH4(+) + ATP = L-asparagine + AMP + diphosphate + H(+). The protein operates within amino-acid biosynthesis; L-asparagine biosynthesis; L-asparagine from L-aspartate (ammonia route): step 1/1. The protein is Aspartate--ammonia ligase of Mycoplasmoides gallisepticum (strain R(low / passage 15 / clone 2)) (Mycoplasma gallisepticum).